Reading from the N-terminus, the 297-residue chain is Protein muscleblind (297 aa).

2 consecutive C3H1-type zinc fingers follow at residues 18–46 and 52–80; these read WLQLEVCREFQRNKCSRQDTECKFAHPPA and NGKVTACYDSIKGRCNRDKPPCKYFHPPQ.

The protein belongs to the muscleblind family. As to expression, expressed in embryonic muscle cells.

The protein localises to the nucleus. Functionally, required for terminal differentiation of photoreceptor cells. Vital for embryonic development. The chain is Protein muscleblind (mbl) from Drosophila melanogaster (Fruit fly).